We begin with the raw amino-acid sequence, 572 residues long: MECLYYFLGFLLLAARLPLDAAKRFHDVLGNERPSAYMREHNQLNGWSSDENDWNEKLYPVWKRGDMRWKNSWKGGRVQAVLTSDSPALVGSNITFAVNLIFPRCQKEDANGNIVYEKNCRNEAGLSADPYVYNWTAWSEDSDGENGTGQSHHNVFPDGKPFPHHPGWRRWNFIYVFHTLGQYFQKLGRCSVRVSVNTANVTLGPQLMEVTVYRRHGRAYVPIAQVKDVYVVTDQIPVFVTMFQKNDRNSSDETFLKDLPIMFDVLIHDPSHFLNYSTINYKWSFGDNTGLFVSTNHTVNHTYVLNGTFSLNLTVKAAAPGPCPPPPPPPRPSKPTPSLATTLKSYDSNTPGPAGDNPLELSRIPDENCQINRYGHFQATITIVEGILEVNIIQMTDVLMPVPWPESSLIDFVVTCQGSIPTEVCTIISDPTCEITQNTVCSPVDVDEMCLLTVRRTFNGSGTYCVNLTLGDDTSLALTSTLISVPDRDPASPLRMANSALISVGCLAIFVTVISLLVYKKHKEYNPIENSPGNVVRSKGLSVFLNRAKAVFFPGNQEKDPLLKNQEFKGVS.

A signal peptide spans 1–22 (MECLYYFLGFLLLAARLPLDAA). The Extracellular segment spans residues 23-498 (KRFHDVLGNE…DPASPLRMAN (476 aa)). Positions 64–66 (RGD) match the Cell attachment site motif. 10 N-linked (GlcNAc...) asparagine glycosylation sites follow: Asn93, Asn134, Asn146, Asn200, Asn249, Asn275, Asn296, Asn300, Asn306, and Asn312. Positions 240-327 (VTMFQKNDRN…AAPGPCPPPP (88 aa)) constitute a PKD domain. A disordered region spans residues 320–362 (PGPCPPPPPPPRPSKPTPSLATTLKSYDSNTPGPAGDNPLELS). The segment covering 321-335 (GPCPPPPPPPRPSKP) has biased composition (pro residues). Residues 338–351 (SLATTLKSYDSNTP) show a composition bias toward polar residues. N-linked (GlcNAc...) asparagine glycosylation is found at Asn459 and Asn467. A helical membrane pass occupies residues 499 to 519 (SALISVGCLAIFVTVISLLVY). At 520–572 (KKHKEYNPIENSPGNVVRSKGLSVFLNRAKAVFFPGNQEKDPLLKNQEFKGVS) the chain is on the cytoplasmic side. At Ser542 the chain carries Phosphoserine.

The protein belongs to the PMEL/NMB family. In terms of tissue distribution, widely expressed, but very low expression, if any, in the brain. Expressed in the epidermis with higher levels in melanocytes compared with keratinocytes and Langerhans cells (at protein level). Expressed in peripheral blood, but not bone marrow mononuclear cells. Expressed in tissue macrophages, including liver Kuppfer cells and lung alveolar macrophages, in podocytes and in some cells of the ciliary body of the eye (at protein level). May be overexpressed in various cancers, including melanoma and glioblastoma multiforme.

It is found in the cell membrane. It localises to the melanosome membrane. The protein localises to the early endosome membrane. Its function is as follows. Could be a melanogenic enzyme. The polypeptide is Transmembrane glycoprotein NMB (GPNMB) (Homo sapiens (Human)).